Reading from the N-terminus, the 272-residue chain is Shikimate dehydrogenase (NADP(+)) (272 aa).

Residues 14-16 (SKS) and threonine 61 contribute to the shikimate site. Lysine 65 serves as the catalytic Proton acceptor. NADP(+) is bound at residue glutamate 77. The shikimate site is built by asparagine 86 and aspartate 102. Residues 126 to 130 (GAGGA), 149 to 154 (NRTASR), and methionine 213 contribute to the NADP(+) site. Tyrosine 215 is a binding site for shikimate. Glycine 237 provides a ligand contact to NADP(+).

This sequence belongs to the shikimate dehydrogenase family. Homodimer.

The enzyme catalyses shikimate + NADP(+) = 3-dehydroshikimate + NADPH + H(+). The protein operates within metabolic intermediate biosynthesis; chorismate biosynthesis; chorismate from D-erythrose 4-phosphate and phosphoenolpyruvate: step 4/7. In terms of biological role, involved in the biosynthesis of the chorismate, which leads to the biosynthesis of aromatic amino acids. Catalyzes the reversible NADPH linked reduction of 3-dehydroshikimate (DHSA) to yield shikimate (SA). The chain is Shikimate dehydrogenase (NADP(+)) from Citrobacter koseri (strain ATCC BAA-895 / CDC 4225-83 / SGSC4696).